A 316-amino-acid chain; its full sequence is uncharacterized protein (316 aa).

The protein belongs to the chlamydial CPn_0441/CT_007/TC_0275 family.

This is an uncharacterized protein from Chlamydia trachomatis serovar D (strain ATCC VR-885 / DSM 19411 / UW-3/Cx).